The primary structure comprises 675 residues: Methionine--tRNA ligase (675 aa).

Positions 15–25 (PYANGSIHLGH) match the 'HIGH' region motif. Zn(2+) contacts are provided by cysteine 146, cysteine 149, cysteine 159, and cysteine 162. Positions 332-336 (KMSKS) match the 'KMSKS' region motif. Lysine 335 serves as a coordination point for ATP. The tRNA-binding domain occupies 573-675 (DFAKVDMRIA…SGAQPGMQVK (103 aa)).

This sequence belongs to the class-I aminoacyl-tRNA synthetase family. MetG type 1 subfamily. In terms of assembly, homodimer. Zn(2+) is required as a cofactor.

The protein localises to the cytoplasm. It carries out the reaction tRNA(Met) + L-methionine + ATP = L-methionyl-tRNA(Met) + AMP + diphosphate. Its function is as follows. Is required not only for elongation of protein synthesis but also for the initiation of all mRNA translation through initiator tRNA(fMet) aminoacylation. The polypeptide is Methionine--tRNA ligase (Yersinia pseudotuberculosis serotype IB (strain PB1/+)).